The primary structure comprises 121 residues: Phosphoribosyl-ATP pyrophosphatase (121 aa).

It belongs to the PRA-PH family.

It is found in the cytoplasm. The enzyme catalyses 1-(5-phospho-beta-D-ribosyl)-ATP + H2O = 1-(5-phospho-beta-D-ribosyl)-5'-AMP + diphosphate + H(+). It participates in amino-acid biosynthesis; L-histidine biosynthesis; L-histidine from 5-phospho-alpha-D-ribose 1-diphosphate: step 2/9. This Burkholderia vietnamiensis (strain G4 / LMG 22486) (Burkholderia cepacia (strain R1808)) protein is Phosphoribosyl-ATP pyrophosphatase.